A 513-amino-acid chain; its full sequence is Keratin, type II cuticular Hb2 (513 aa).

The segment at 1–120 (MSYHSFQPGS…PTVQRVKRDE (120 aa)) is head. An IF rod domain is found at 120–431 (EKEQIKCLNN…RLLEGEEHRL (312 aa)). Residues 121-155 (KEQIKCLNNRFASFINKVRFLEQKNKLLETKWNFM) are coil 1A. The segment at 156 to 165 (QQQRCCQTNI) is linker 1. The interval 166–266 (EPIFEGYISA…YEEEICLLQS (101 aa)) is coil 1B. Residues 267 to 283 (QISETSVIVKMDNSREL) are linker 12. The segment at 284–427 (DVDGIIAEIK…ATYRRLLEGE (144 aa)) is coil 2. Positions 428-513 (EHRLCEGIGP…AGGSSPSHKH (86 aa)) are tail.

It belongs to the intermediate filament family. In terms of assembly, heterotetramer of two type I and two type II keratins.

In Homo sapiens (Human), this protein is Keratin, type II cuticular Hb2 (KRT82).